Consider the following 1136-residue polypeptide: DNA-directed RNA polymerase I subunit RPA2 (1136 aa).

The interval 1–24 (MDPGSRWRNLPSGPSLKHLTDPSY) is disordered. R180 serves as a coordination point for RNA. Residues 194–208 (VRPKWKTRGPGYTHY) form a loop B region. The tract at residues 236 to 247 (LNFIYRKELFFL) is loop A. D367 serves as a coordination point for RNA. Fork loop stretches follow at residues 439 to 453 (LRSKTGLGLLQDSGL) and 474 to 489 (RGADFAKMRTTTVRRL). K890 is a binding site for RNA. Positions 1020 and 1036 each coordinate DNA. A Phosphoserine modification is found at S1051. Zn(2+) contacts are provided by C1071, C1074, C1099, and C1102. A C4-type zinc finger spans residues 1071–1102 (CVKCGSLLSPLLEKPPPSWSAMRNRKYNCTLC).

It belongs to the RNA polymerase beta chain family. Component of the RNA polymerase I (Pol I) complex consisting of 13 subunits: a ten-subunit catalytic core composed of POLR1A/RPA1, POLR1B/RPA2, POLR1C/RPAC1, POLR1D/RPAC2, POLR1H/RPA12, POLR2E/RPABC1, POLR2F/RPABC2, POLR2H/RPABC3, POLR2K/RPABC4 and POLR2L/RPABC5; a mobile stalk subunit POLR1F/RPA43 protruding from the core and additional subunits homologous to general transcription factors POLR1E/RPA49 and POLR1G/RPA34. Part of Pol I pre-initiation complex (PIC), in which Pol I core assembles with RRN3 and promoter-bound UTBF and SL1/TIF-IB complex.

The protein localises to the nucleus. It localises to the nucleolus. Its subcellular location is the chromosome. It carries out the reaction RNA(n) + a ribonucleoside 5'-triphosphate = RNA(n+1) + diphosphate. Functionally, catalytic core component of RNA polymerase I (Pol I), a DNA-dependent RNA polymerase which synthesizes ribosomal RNA precursors using the four ribonucleoside triphosphates as substrates. Transcribes 47S pre-rRNAs from multicopy rRNA gene clusters, giving rise to 5.8S, 18S and 28S ribosomal RNAs. Pol I-mediated transcription cycle proceeds through transcription initiation, transcription elongation and transcription termination stages. During transcription initiation, Pol I pre-initiation complex (PIC) is recruited by the selectivity factor 1 (SL1/TIF-IB) complex bound to the core promoter that precedes an rDNA repeat unit. The PIC assembly bends the promoter favoring the formation of the transcription bubble and promoter escape. Once the polymerase has escaped from the promoter it enters the elongation phase during which RNA is actively polymerized, based on complementarity with the template DNA strand. Highly processive, assembles in structures referred to as 'Miller trees' where many elongating Pol I complexes queue and transcribe the same rDNA coding regions. At terminator sequences downstream of the rDNA gene, PTRF interacts with Pol I and halts Pol I transcription leading to the release of the RNA transcript and polymerase from the DNA. Forms Pol I active center together with the largest subunit POLR1A/RPA1. Appends one nucleotide at a time to the 3' end of the nascent RNA, with POLR1A/RPA1 contributing a Mg(2+)-coordinating DxDGD motif, and POLR1B/RPA2 providing lysine residues believed to facilitate Watson-Crick base pairing between the incoming nucleotide and the template base. Typically, Mg(2+) ions direct a 5' nucleoside triphosphate to form a phosphodiester bond with the 3' hydroxyl of the preceding nucleotide of the nascent RNA, with the elimination of pyrophosphate. Has proofreading activity: Pauses and backtracks to allow the cleavage of a missincorporated nucleotide via POLR1H/RPA12. High Pol I processivity is associated with decreased transcription fidelity. In Pongo abelii (Sumatran orangutan), this protein is DNA-directed RNA polymerase I subunit RPA2 (POLR1B).